The primary structure comprises 557 residues: Probable serine/threonine-protein kinase WNK7 (557 aa).

A Protein kinase domain is found at 28–285; that stretch reads IRYKEVIGKG…AEELLLDSFL (258 aa). ATP is bound by residues 108–111 and Lys158; that span reads TELF. The active-site Proton acceptor is Asp175. Polar residues predominate over residues 451–477; the sequence is QNQSSKDNHQNGASSQAGESISHSLSS. Residues 451–517 form a disordered region; that stretch reads QNQSSKDNHQ…EEEEDERLKE (67 aa). Ser505 carries the phosphoserine modification.

Belongs to the protein kinase superfamily. Ser/Thr protein kinase family. WNK subfamily.

It catalyses the reaction L-seryl-[protein] + ATP = O-phospho-L-seryl-[protein] + ADP + H(+). It carries out the reaction L-threonyl-[protein] + ATP = O-phospho-L-threonyl-[protein] + ADP + H(+). Its function is as follows. May regulate flowering time by modulating the photoperiod pathway. The polypeptide is Probable serine/threonine-protein kinase WNK7 (WNK7) (Arabidopsis thaliana (Mouse-ear cress)).